Here is a 477-residue protein sequence, read N- to C-terminus: 3-isopropylmalate dehydratase large subunit (477 aa).

[4Fe-4S] cluster-binding residues include Cys352, Cys413, and Cys416.

The protein belongs to the aconitase/IPM isomerase family. LeuC type 1 subfamily. In terms of assembly, heterodimer of LeuC and LeuD. It depends on [4Fe-4S] cluster as a cofactor.

The catalysed reaction is (2R,3S)-3-isopropylmalate = (2S)-2-isopropylmalate. It participates in amino-acid biosynthesis; L-leucine biosynthesis; L-leucine from 3-methyl-2-oxobutanoate: step 2/4. Functionally, catalyzes the isomerization between 2-isopropylmalate and 3-isopropylmalate, via the formation of 2-isopropylmaleate. In Pseudomonas putida (strain GB-1), this protein is 3-isopropylmalate dehydratase large subunit.